The following is a 2098-amino-acid chain: MVLVSKGDFIWIEPGKTEGSIPIGARVIDQDHGRLKVIDDLGNEQWLSADRRVRLMHPTSVQGVEDMCQLGDFHESAILRNLFIRYREKLIYAYTGSILIAVNPYMDIAIYTADEIRMYKRKRIGELPPHIFAIADNAYTNMRREKKNQSVIISGESGAGKTESTKLVLQFLATISGQHSWIEQQVLEANPVLEAFGNAKTIRNDNSSRFGKYIDVHFNESGSIEGAKIEQYLLEKSRIVTQSENERNYHIFYCLLAGLSREEKSELELGTAADYYYLIQGKTLTAEGRDDAADLAEIRSAMRVLMINEQEIGSIFKLLASLLHIGNIRFRQNTNDNMESVDVADPSTLVRIAKLLQLHEQNLLDAITTKSLVTREERVISRLNGQQAVDARDALAKAIYGKLFIHIVRRVNDAIYKPSQSRRTSIGILDIFGFENFESNSFEQLCINFANETLQQFFVHHVFKMEQKEYDEEHINWRHIKFVDNQATVDLIAQRPLNILSLIDEESIFPKGTDKTMLLKLHSTHGRNELYLQPKSELQRAFGVTHFAGNVFYNTRGFLEKNRDSFSADLSVLISSSKMPFLARLFDDIEYDTSSRKKVTVGNQFRRSLEQLMSQLTQTHPFFIRCIKPNEMKRALVMDRDLVLRQLRYSGMMETIKIRRSGYPIRHDYYPFVFRYRVLVSSIQGPVNRIDLHDAAKKICHMILGTNADYQLGKTKVFLKDKHDLVLEQEYYRILKDKAIVIQKNVRRWLVRKDFEKQRQAAVTIQTAWRGFDQRKRYRQIISGFSRLQAVLRSRQLVSHYQTLRKTIIQFQAVCRGSLVRRQVGEKRKRGEKAPLTEVSSTASVISDSHEELVGHLFDFLPSDGKDSGNENDSADSSRRGSYSRLHTSPVMPPANIPRVDSYVDEDLSKYQFGKYAATFFQAQATATHVKKPLKTALLTHTEPSAQLAALTAWTTILRFMGDLADVKPGSTNGSEVYDKTPVMIKLYATLGKKFSAHDLEEAMLSSEYGGAKTLKKGMGRKLISMTLKRKGKINGSDTSSISSDSVYSSFNAMLENKPMTSLDKLHYIIGLGILREDLRDEIYCQLCKQLSNNPSKLSAARGWILLSLCVGCFAPSERFIKYLFCFIRERGPAGTGYSKYIEDRLRRTQVNGTRHQPPSYVELQANKSQKPVVLAVTFMDGSVKTLCADSATTAAELCKQLAEKVGLTNSFGFSLYIALFDKVSSLGSGTDHVMDAISQCEQYAKEQGRQERNAPWRLFFRKEIFSPWHDPRDDPVSTNLIYQQVIRGIKYGEYRCDKDEELAAICAQQYYIDEGTMDVNKLENNLPSYLPDFEMSGKEMALEKWTQTIMHQYRKKFTGRLPSQIEVKENVVSVAKTKWPLLFSRFYEALKFAGPPLPKNEVIIAVNWTGVYVVDDREHVMLEFSFPEISTAYYGKGKRSTTDTCTVRTVVGDEYTFQSPNADDITNLIVMFLEGLKKRSRYLVAIKSQKGDEKNNFLEFEKGDLLILVNEFTGNTLLTESVVKGENSRTCLFGLIRAENVYVLPTLVKPSKNTLQIFPKDMDLSLDLFNNNKQVTVVDYNAEPYTLENFAEDNFNSQVKRVGSQISLMTLRKKESQIECWRFSREHIDQPLLKKLNGREDACRGAIEIFAAIMKYMGDEPSKRSRLGTHLTDHIFKLPISMEALRDELYCQLVKQLTLNPSIMSEERGWELLWMATGLFAPSAALAKEISHFLKSRPHPIALDCQNRMQKLAKGGSRKYPPHLVEVEAIQHKTTQIFHKVFFPDNTDEAIEVDSATRARDFCHKIGYRLGLKSSDGFSLFVKIKDKVLAVPESEFFFDYVRSLSDWVHTNHATQKDATMIPINYQVYFMRKLWYNFVAGADPQADIIFHYHQESQKYLLGYHKTTKNDVIELAALILRSMTKDGKNAPLAQIPQLLDEIIPKDSLKMYSASEWRKTISNAYARIEHLKSDQAKIEFLNYICRWPTFGSAFFPVSQYSDLNLPDRLLLAINQTGVNIYHLDTKNLLVQYPFNVICNWTSGNTYFNMTVGNMLKGNEGKKLLLDTTVGYKMDDLLTSYISLLISNQNNHPSKTREVAL.

Residues 62–732 enclose the Myosin motor domain; it reads QGVEDMCQLG…HDLVLEQEYY (671 aa). Residue 155-162 participates in ATP binding; sequence GESGAGKT. Actin-binding regions lie at residues 609 to 631 and 711 to 725; these read LEQLMSQLTQTHPFFIRCIKPNE and QLGKTKVFLKDKHDL. IQ domains follow at residues 735-757, 758-787, and 804-833; these read LKDKAIVIQKNVRRWLVRKDFEK, QRQAAVTIQTAWRGFDQRKRYRQIISGFSR, and LRKTIIQFQAVCRGSLVRRQVGEKRKRGEK. Residues 860–898 are disordered; that stretch reads FLPSDGKDSGNENDSADSSRRGSYSRLHTSPVMPPANIP. The MyTH4 1 domain occupies 929–1168; that stretch reads HVKKPLKTAL…PSYVELQANK (240 aa). Residues 1171-1211 enclose the Ras-associating domain; sequence KPVVLAVTFMDGSVKTLCADSATTAAELCKQLAEKVGLTNS. Residues 1173 to 1481 form the FERM 1 domain; the sequence is VVLAVTFMDG…MFLEGLKKRS (309 aa). An SH3 domain is found at 1479 to 1547; that stretch reads KRSRYLVAIK…RAENVYVLPT (69 aa). The 149-residue stretch at 1624–1772 folds into the MyTH4 2 domain; it reads FSREHIDQPL…PHLVEVEAIQ (149 aa). The FERM 2 domain occupies 1778 to 2086; sequence IFHKVFFPDN…SYISLLISNQ (309 aa).

Belongs to the TRAFAC class myosin-kinesin ATPase superfamily. Myosin family. Interacts with unc-98.

The protein resides in the cytoplasm. Its function is as follows. Myosins are actin-based motor molecules with ATPase activity. Unconventional myosins serve in intracellular movements. Their highly divergent tails are presumed to bind to membranous compartments, which would be moved relative to actin filaments. The protein is Unconventional myosin heavy chain 6 of Caenorhabditis elegans.